A 491-amino-acid polypeptide reads, in one-letter code: Serine/threonine-protein kinase 3 (491 aa).

Residue Met1 is modified to N-acetylmethionine. Position 15 is a phosphoserine (Ser15). Positions 27-278 constitute a Protein kinase domain; sequence FDVLEKLGEG…ATQLLQHPFI (252 aa). ATP is bound by residues 33–41 and Lys56; that span reads LGEGSYGSV. Thr117 is modified (phosphothreonine; by PKB/AKT1). Asp146 (proton acceptor) is an active-site residue. Residues Asn151 and Asp164 each contribute to the Mg(2+) site. The residue at position 180 (Thr180) is a Phosphothreonine; by autocatalysis. Positions 291–324 form a coiled coil; the sequence is ITEGMEIKAKRHEEQQRELEDEEENSDEDELDSH. Disordered stretches follow at residues 301-343 and 370-392; these read RHEE…TSTM and EDEEEEDGTMKRNATSPQVQRPS. Acidic residues predominate over residues 309-321; the sequence is LEDEEENSDEDEL. Ser316 carries the post-translational modification Phosphoserine. Residues 326 to 343 show a composition bias toward polar residues; that stretch reads MVKTSSEGVGTMRATSTM. A phosphothreonine mark is found at Thr336 and Thr378. Positions 381–390 are enriched in polar residues; the sequence is RNATSPQVQR. Thr384 is subject to Phosphothreonine; by PKB/AKT1. Residues Ser385 and Ser444 each carry the phosphoserine modification. Residues 437–484 form the SARAH domain; it reads FDFLKNLSLEELQMRLKALDPMMEREIEELHQRYSAKRQPILDAMDAK.

It belongs to the protein kinase superfamily. STE Ser/Thr protein kinase family. STE20 subfamily. Homodimer; mediated via the coiled-coil region. Interacts with NORE1, which inhibits autoactivation. Interacts with and stabilizes SAV1. Interacts with RAF1, which prevents dimerization and phosphorylation. Interacts with RASSF1. Interacts (via SARAH domain) with isoform 1 of NEK2. Interacts with ESR1 only in the presence of SAV1. Interacts with PKB/AKT1. Forms a tripartite complex with MOBKL1B and STK38. Interacts with RASSF2 (via SARAH domain). Interacts with DLG5 (via PDZ domain 3). Interacts with LATS1; this interaction is inhibited in the presence of DLG5. Interacts with MARK3 in the presence of DLG5. Interacts with RASSF5; this interaction inhibits STK3 autoactivation through heterodimerization. Interacts (when phosphorylated) with SLMAP (via FHA domain); the interaction associates STK3 with the STRIPAK complex. Mg(2+) is required as a cofactor. Post-translationally, autophosphorylated on two residues Thr-174 and Thr-180, leading to activation. Phosphorylation at Thr-117 and Thr-384 by PKB/AKT1, leads to inhibition of its: cleavage, kinase activity, autophosphorylation at Thr-180, binding to RASSF1 and nuclear translocation, and increase in its binding to RAF1. Phosphorylated at Ser-15 by PLK1, leading to activation. In terms of processing, proteolytically cleaved by caspase-3 during apoptosis. Proteolytic cleavage results in kinase activation and nuclear translocation of the truncated form (MST1/N). Ubiquitinated by TRIM69; leading to its redistribution to the perinuclear cytoskeleton.

It localises to the cytoplasm. The protein localises to the nucleus. It catalyses the reaction L-seryl-[protein] + ATP = O-phospho-L-seryl-[protein] + ADP + H(+). The enzyme catalyses L-threonyl-[protein] + ATP = O-phospho-L-threonyl-[protein] + ADP + H(+). Its activity is regulated as follows. Inhibited by the C-terminal non-catalytic region. Activated by caspase-cleavage. Full activation also requires homodimerization and autophosphorylation of Thr-180, which are inhibited by the proto-oncogene product RAF1. Activated by RASSF1 which acts by preventing its dephosphorylation. When autophosphorylated at Thr-180, recruits STRIPAK complex and promotes PP2A-mediated dephosphorylation and inactivation of STK3. In terms of biological role, stress-activated, pro-apoptotic kinase which, following caspase-cleavage, enters the nucleus and induces chromatin condensation followed by internucleosomal DNA fragmentation. Key component of the Hippo signaling pathway which plays a pivotal role in organ size control and tumor suppression by restricting proliferation and promoting apoptosis. The core of this pathway is composed of a kinase cascade wherein STK3/MST2 and STK4/MST1, in complex with its regulatory protein SAV1, phosphorylates and activates LATS1/2 in complex with its regulatory protein MOB1, which in turn phosphorylates and inactivates YAP1 oncoprotein and WWTR1/TAZ. Phosphorylation of YAP1 by LATS2 inhibits its translocation into the nucleus to regulate cellular genes important for cell proliferation, cell death, and cell migration. STK3/MST2 and STK4/MST1 are required to repress proliferation of mature hepatocytes, to prevent activation of facultative adult liver stem cells (oval cells), and to inhibit tumor formation. Phosphorylates NKX2-1. Phosphorylates NEK2 and plays a role in centrosome disjunction by regulating the localization of NEK2 to centrosomes, and its ability to phosphorylate CROCC and CEP250. In conjunction with SAV1, activates the transcriptional activity of ESR1 through the modulation of its phosphorylation. Positively regulates RAF1 activation via suppression of the inhibitory phosphorylation of RAF1 on 'Ser-259'. Phosphorylates MOBKL1A and RASSF2. Phosphorylates MOBKL1B on 'Thr-74'. Acts cooperatively with MOBKL1B to activate STK38. This chain is Serine/threonine-protein kinase 3 (Stk3), found in Rattus norvegicus (Rat).